We begin with the raw amino-acid sequence, 199 residues long: Small ribosomal subunit protein uS4 (199 aa).

Positions serine 94–leucine 157 constitute an S4 RNA-binding domain.

The protein belongs to the universal ribosomal protein uS4 family. Part of the 30S ribosomal subunit. Contacts protein S5. The interaction surface between S4 and S5 is involved in control of translational fidelity.

Its function is as follows. One of the primary rRNA binding proteins, it binds directly to 16S rRNA where it nucleates assembly of the body of the 30S subunit. Functionally, with S5 and S12 plays an important role in translational accuracy. This Mycoplasmopsis synoviae (strain 53) (Mycoplasma synoviae) protein is Small ribosomal subunit protein uS4.